The primary structure comprises 195 residues: Glycerol-3-phosphate acyltransferase (195 aa).

A run of 6 helical transmembrane segments spans residues 2–22, 54–74, 80–100, 107–127, 132–152, and 155–175; these read IFFS…SSAI, IAIS…WLGY, PIFL…PIFF, GVAT…IVMI, LTVL…FIIP, and AWHF…LVVI.

It belongs to the PlsY family. As to quaternary structure, probably interacts with PlsX.

It is found in the cell inner membrane. It carries out the reaction an acyl phosphate + sn-glycerol 3-phosphate = a 1-acyl-sn-glycero-3-phosphate + phosphate. It functions in the pathway lipid metabolism; phospholipid metabolism. Its function is as follows. Catalyzes the transfer of an acyl group from acyl-phosphate (acyl-PO(4)) to glycerol-3-phosphate (G3P) to form lysophosphatidic acid (LPA). This enzyme utilizes acyl-phosphate as fatty acyl donor, but not acyl-CoA or acyl-ACP. This chain is Glycerol-3-phosphate acyltransferase, found in Blochmanniella pennsylvanica (strain BPEN).